Consider the following 159-residue polypeptide: Flagellar assembly factor FliW (159 aa).

The protein belongs to the FliW family. Interacts with translational regulator CsrA and flagellin(s).

The protein resides in the cytoplasm. Functionally, acts as an anti-CsrA protein, binds CsrA and prevents it from repressing translation of its target genes, one of which is flagellin. Binds to flagellin and participates in the assembly of the flagellum. This is Flagellar assembly factor FliW from Geobacter sulfurreducens (strain ATCC 51573 / DSM 12127 / PCA).